The sequence spans 136 residues: Putative zinc finger protein 818 (136 aa).

A C2H2-type 1; degenerate zinc finger spans residues Asn-64–His-83. Residues Tyr-89–His-111 form a C2H2-type 2 zinc finger.

It belongs to the krueppel C2H2-type zinc-finger protein family.

It localises to the nucleus. Its function is as follows. May be involved in transcriptional regulation. This chain is Putative zinc finger protein 818 (ZNF818P), found in Homo sapiens (Human).